Reading from the N-terminus, the 687-residue chain is Elongation factor G (687 aa).

A tr-type G domain is found at 8 to 282 (NKFRNIGIMA…AVLAYLPSPL (275 aa)). GTP-binding positions include 17–24 (AHIDAGKT), 81–85 (DTPGH), and 135–138 (NKMD).

This sequence belongs to the TRAFAC class translation factor GTPase superfamily. Classic translation factor GTPase family. EF-G/EF-2 subfamily.

The protein resides in the cytoplasm. In terms of biological role, catalyzes the GTP-dependent ribosomal translocation step during translation elongation. During this step, the ribosome changes from the pre-translocational (PRE) to the post-translocational (POST) state as the newly formed A-site-bound peptidyl-tRNA and P-site-bound deacylated tRNA move to the P and E sites, respectively. Catalyzes the coordinated movement of the two tRNA molecules, the mRNA and conformational changes in the ribosome. The chain is Elongation factor G from Clostridium novyi (strain NT).